The primary structure comprises 410 residues: Porin-like protein GalP (410 aa).

A signal peptide spans 1–25 (MKCRTLYPLVPTFALAASLPLQALA).

Belongs to the outer membrane porin (Opr) (TC 1.B.25) family.

Functionally, probable transporter, possibly involved in the gallate degradation pathway. May play a role in the uptake of low gallate concentrations that may exist in the natural habitats of P.putida. This Pseudomonas putida (strain ATCC 47054 / DSM 6125 / CFBP 8728 / NCIMB 11950 / KT2440) protein is Porin-like protein GalP (galP).